The sequence spans 146 residues: Hemoglobin subunit beta (146 aa).

Valine 1 is modified (N-acetylvaline). The Globin domain occupies 2 to 146 (HLTPEEKNAV…VANALAHKYH (145 aa)). Threonine 12 is subject to Phosphothreonine. Position 44 is a phosphoserine (serine 44). Lysine 59 carries the post-translational modification N6-acetyllysine. Histidine 63 contacts heme b. At lysine 82 the chain carries N6-acetyllysine. Histidine 92 contacts heme b. Cysteine 93 carries the S-nitrosocysteine modification. N6-acetyllysine is present on lysine 144.

This sequence belongs to the globin family. As to quaternary structure, heterotetramer of two alpha chains and two beta chains. In terms of tissue distribution, red blood cells.

Involved in oxygen transport from the lung to the various peripheral tissues. This chain is Hemoglobin subunit beta (HBB), found in Macaca mulatta (Rhesus macaque).